The primary structure comprises 331 residues: Protein C10 (331 aa).

It belongs to the poxviridae C4/C10 protein family.

The protein is Protein C10 of Vaccinia virus (strain Western Reserve) (VACV).